A 173-amino-acid chain; its full sequence is Mesencephalic astrocyte-derived neurotrophic factor homolog (173 aa).

The first 22 residues, 1–22 (MKTWYMVVVIGFLATLAQTSLA), serve as a signal peptide directing secretion. Intrachain disulfides connect Cys28-Cys114, Cys31-Cys103, Cys61-Cys72, and Cys148-Cys151.

The protein belongs to the ARMET family.

The protein resides in the secreted. Functionally, required during the maturation of the embryonic nervous system for maintenance of neuronal and cuticular connectivity. Essential for maintenance of dopaminergic neurons and dopamine levels. The polypeptide is Mesencephalic astrocyte-derived neurotrophic factor homolog (Drosophila erecta (Fruit fly)).